The chain runs to 469 residues: MEFVSMLCLFTFISLTLLLIHSIFKFLAFASKKLPLPPGTLGLPYIGETFQLYSQNPNVFFASKVKKYGSIFKTYILGCPCVMISSPEAAKQVLVTKANLFKPTFPASKERMLGKQAIFFHQGDYHAKLRKLVLQAFKPDSIRNIIPDIESIAITSLESFQGRLINTYQEMKTYTFNVALISIFGKDEFLYREELKKCYYILEKGYNSMPINLPGTLFNKAMKARKELAKIVAKIISTRREMKIDHGDLLGSFMGDKEGLTDEQIADNVIGVIFAARDTTASVLTWILKYLGENPSVLQAVTEEQENIMRKKEVNGEEKVLNWQDTRQMPMTTRVIQETLRVASILSFTFREAVEDVEFEGYLIPKGWKVLPLFRNIHHSPDNFPEPEKFDPSRFEVSPKPNTFMPFGNGVHSCPGNDLAKLEILILVHHLTTKYRWSMVGPQNGIQYGPFALPQNGLPIKLSLKTSST.

Residues 3–23 (FVSMLCLFTFISLTLLLIHSI) traverse the membrane as a helical segment. Residue C414 coordinates heme.

It belongs to the cytochrome P450 family. Heme serves as cofactor. In terms of tissue distribution, expressed at low levels in fruit.

The protein localises to the membrane. The enzyme catalyses 2-cis-(+)-abscisate + reduced [NADPH--hemoprotein reductase] + O2 = (+)-8'-hydroxyabscisate + oxidized [NADPH--hemoprotein reductase] + H2O + H(+). Its pathway is plant hormone degradation; abscisic acid degradation. Its function is as follows. Negative regulator of fruit ripening involved in the oxidative degradation of abscisic acid (ABA). This chain is Abscisic acid 8'-hydroxylase CYP707A2, found in Solanum lycopersicum (Tomato).